Reading from the N-terminus, the 914-residue chain is DNA mismatch repair protein MutS (914 aa).

The tract at residues methionine 1–arginine 25 is disordered. Residues leucine 11 to arginine 25 are compositionally biased toward polar residues. Glycine 662–serine 669 is an ATP binding site.

It belongs to the DNA mismatch repair MutS family.

This protein is involved in the repair of mismatches in DNA. It is possible that it carries out the mismatch recognition step. This protein has a weak ATPase activity. In Bartonella tribocorum (strain CIP 105476 / IBS 506), this protein is DNA mismatch repair protein MutS.